A 397-amino-acid polypeptide reads, in one-letter code: Elongation factor Tu 2 (397 aa).

Positions 10 to 206 (KPHVNIGTIG…AIDTWIPEPV (197 aa)) constitute a tr-type G domain. Residues 19 to 26 (GHVDHGKT) are G1. 19–26 (GHVDHGKT) is a GTP binding site. Position 26 (Thr26) interacts with Mg(2+). Residues 61–65 (GITIS) form a G2 region. The tract at residues 82-85 (DCPG) is G3. GTP is bound by residues 82–86 (DCPGH) and 137–140 (NKCD). The G4 stretch occupies residues 137-140 (NKCD). Residues 175–177 (SAL) form a G5 region.

Belongs to the TRAFAC class translation factor GTPase superfamily. Classic translation factor GTPase family. EF-Tu/EF-1A subfamily. As to quaternary structure, monomer.

It is found in the cytoplasm. It carries out the reaction GTP + H2O = GDP + phosphate + H(+). Functionally, GTP hydrolase that promotes the GTP-dependent binding of aminoacyl-tRNA to the A-site of ribosomes during protein biosynthesis. This chain is Elongation factor Tu 2, found in Alkaliphilus metalliredigens (strain QYMF).